The following is a 261-amino-acid chain: 3-deoxy-manno-octulosonate cytidylyltransferase 1 (261 aa).

This sequence belongs to the KdsB family.

The protein localises to the cytoplasm. It catalyses the reaction 3-deoxy-alpha-D-manno-oct-2-ulosonate + CTP = CMP-3-deoxy-beta-D-manno-octulosonate + diphosphate. It functions in the pathway nucleotide-sugar biosynthesis; CMP-3-deoxy-D-manno-octulosonate biosynthesis; CMP-3-deoxy-D-manno-octulosonate from 3-deoxy-D-manno-octulosonate and CTP: step 1/1. The protein operates within bacterial outer membrane biogenesis; lipopolysaccharide biosynthesis. Its function is as follows. Activates KDO (a required 8-carbon sugar) for incorporation into bacterial lipopolysaccharide in Gram-negative bacteria. The chain is 3-deoxy-manno-octulosonate cytidylyltransferase 1 from Burkholderia lata (strain ATCC 17760 / DSM 23089 / LMG 22485 / NCIMB 9086 / R18194 / 383).